Consider the following 161-residue polypeptide: Nucleotide-binding protein Plav_2177 (161 aa).

The protein belongs to the YajQ family.

Its function is as follows. Nucleotide-binding protein. The sequence is that of Nucleotide-binding protein Plav_2177 from Parvibaculum lavamentivorans (strain DS-1 / DSM 13023 / NCIMB 13966).